The primary structure comprises 1205 residues: Nitric oxide synthase 3 (1205 aa).

Residues 1–73 (MGNLKSVGQE…PPEGPKFPRV (73 aa)) form a disordered region. Gly-2 carries the N-myristoyl glycine lipid modification. 2 S-palmitoyl cysteine lipidation sites follow: Cys-15 and Cys-26. A compositionally biased stretch (gly residues) spans 15–27 (CGLGLGLGLGLCG). Pro residues predominate over residues 33–47 (TPAPEPSRAPAPATP). Zn(2+) contacts are provided by Cys-96 and Cys-101. The segment at 100 to 488 (RCLGSLVLPR…PDPWKGSAAK (389 aa)) is interaction with NOSIP. Position 104 (Ser-104) interacts with (6R)-L-erythro-5,6,7,8-tetrahydrobiopterin. Ser-116 bears the Phosphoserine; by CDK5 mark. Cys-186 contacts heme b. L-arginine contacts are provided by Gln-249, Trp-358, Tyr-359, Glu-363, and Asn-368. Positions 448, 449, and 462 each coordinate (6R)-L-erythro-5,6,7,8-tetrahydrobiopterin. Tyr-477 contacts heme b. The tract at residues 492 to 512 (IARKKTFKEVANAVKISASLM) is calmodulin-binding. A Phosphothreonine; by AMPK modification is found at Thr-497. A Flavodoxin-like domain is found at 522–705 (ASILYASETV…AFRGWAQAAF (184 aa)). The FMN site is built by Ser-528, Glu-529, Thr-530, Arg-532, Ser-574, and Thr-575. Residues Ser-617, Ser-635, and Ser-640 each carry the phosphoserine modification. Positions 656, 663, 689, and 693 each coordinate FMN. An FAD-binding FR-type domain is found at 758–1004 (RKMFQATVLS…IRAAPSFRLP (247 aa)). Arg-778 is a binding site for NADP(+). His-800 provides a ligand contact to FAD. The segment at 820–848 (EDPTPPTESVGVEQLEKGSPGGPPPSWVR) is disordered. Ser-838 bears the Phosphoserine mark. Positions 940, 942, 943, 958, 960, 964, 977, 978, and 979 each coordinate FAD. Positions 1018, 1051, 1080, 1081, 1087, 1089, and 1091 each coordinate NADP(+). Thr-1177 carries the phosphothreonine modification. Ser-1179 carries the post-translational modification Phosphoserine; by AMPK. Ser-1181 is modified (phosphoserine).

Belongs to the NOS family. Homodimer. Interacts with NOSIP and NOSTRIN. Interacts with HSP90AB1. Forms a complex with ASL, ASS1 and SLC7A1; the complex regulates cell-autonomous L-arginine synthesis and citrulline recycling while channeling extracellular L-arginine to nitric oxide synthesis pathway. Heme b is required as a cofactor. Requires FAD as cofactor. FMN serves as cofactor. The cofactor is (6R)-L-erythro-5,6,7,8-tetrahydrobiopterin. Post-translationally, phosphorylation by AMPK at Ser-1179 in the presence of Ca(2+)-calmodulin (CaM) activates activity. In absence of Ca(2+)-calmodulin, AMPK also phosphorylates Thr-497, resulting in inhibition of activity. Phosphorylation of Ser-116 by CDK5 reduces activity.

The protein localises to the membrane. The protein resides in the caveola. It is found in the cytoplasm. It localises to the cytoskeleton. Its subcellular location is the golgi apparatus. The protein localises to the cell membrane. It carries out the reaction 2 L-arginine + 3 NADPH + 4 O2 + H(+) = 2 L-citrulline + 2 nitric oxide + 3 NADP(+) + 4 H2O. With respect to regulation, stimulated by calcium/calmodulin. Inhibited by NOSIP and NOSTRIN. In terms of biological role, produces nitric oxide (NO) which is implicated in vascular smooth muscle relaxation through a cGMP-mediated signal transduction pathway. NO mediates vascular endothelial growth factor (VEGF)-induced angiogenesis in coronary vessels and promotes blood clotting through the activation of platelets. This Sus scrofa (Pig) protein is Nitric oxide synthase 3 (NOS3).